Consider the following 505-residue polypeptide: MSNICQRLWEYLEPYLPCLSTEADKSTVIENPGALCSPQSQRHGHYFVALFDYQARTAEDLSFRAGDKLQVLDTLHEGWWFARHLEKRRDGSSQQLQGYIPSNYVAEDRSLQAEPWFFGAIGRSDAEKQLLYSENKTGSFLIRESESQKGEFSLSVLDGAVVKHYRIKRLDEGGFFLTRRRIFSTLNEFVSHYTKTSDGLCVKLGKPCLKIQVPAPFDLSYKTVDQWEIDRNSIQLLKRLGSGQFGEVWEGLWNNTTPVAVKTLKPGSMDPNDFLREAQIMKNLRHPKLIQLYAVCTLEDPIYIITELMRHGSLQEYLQNDTGSKIHLTQQVDMAAQVASGMAYLESRNYIHRDLAARNVLVGEHNIYKVADFGLARVFKVDNEDIYESRHEIKLPVKWTAPEAIRSNKFSIKSDVWSFGILLYEIITYGKMPYSGMTGAQVIQMLAQNYRLPQPSNCPQQFYNIMLECWNAEPKERPTFETLRWKLEDYFETDSSYSDANNFIR.

Phosphoserine is present on residues serine 37 and serine 40. An SH3 domain is found at arginine 42–serine 110. The 93-residue stretch at tryptophan 116–cysteine 208 folds into the SH2 domain. Phosphothreonine is present on threonine 178. A Protein kinase domain is found at isoleucine 234–phenylalanine 491. ATP contacts are provided by residues leucine 240–valine 248 and lysine 262. Aspartate 354 serves as the catalytic Proton acceptor. Residue tyrosine 387 is modified to Phosphotyrosine; by autocatalysis.

The protein belongs to the protein kinase superfamily. Tyr protein kinase family. SRC subfamily. As to quaternary structure, interacts (via the SH3-domain) with PTEN. Interacts with RB1. Predominantly expressed in epithelial derived cell lines and tissues, especially normal liver, kidney, breast and colon.

The protein resides in the cytoplasm. Its subcellular location is the nucleus. It catalyses the reaction L-tyrosyl-[protein] + ATP = O-phospho-L-tyrosyl-[protein] + ADP + H(+). In terms of biological role, non-receptor tyrosine-protein kinase that negatively regulates cell proliferation. Positively regulates PTEN protein stability through phosphorylation of PTEN on 'Tyr-336', which in turn prevents its ubiquitination and degradation, possibly by reducing its binding to NEDD4. May function as a tumor suppressor. In Homo sapiens (Human), this protein is Tyrosine-protein kinase FRK (FRK).